Here is a 541-residue protein sequence, read N- to C-terminus: Chaperonin GroEL (541 aa).

Residues 29–32 (TLGP), 86–90 (DGTTT), Gly413, 476–478 (NAA), and Asp492 contribute to the ATP site. Residues 521–541 (KPEENAPAAPAAPNPGMGGMM) are disordered. The segment covering 525 to 535 (NAPAAPAAPNP) has biased composition (low complexity).

Belongs to the chaperonin (HSP60) family. In terms of assembly, forms a cylinder of 14 subunits composed of two heptameric rings stacked back-to-back. Interacts with the co-chaperonin GroES.

It is found in the cytoplasm. It catalyses the reaction ATP + H2O + a folded polypeptide = ADP + phosphate + an unfolded polypeptide.. Functionally, together with its co-chaperonin GroES, plays an essential role in assisting protein folding. The GroEL-GroES system forms a nano-cage that allows encapsulation of the non-native substrate proteins and provides a physical environment optimized to promote and accelerate protein folding. The chain is Chaperonin GroEL from Lactiplantibacillus plantarum (strain ATCC BAA-793 / NCIMB 8826 / WCFS1) (Lactobacillus plantarum).